The following is a 439-amino-acid chain: Protein translocase subunit SecY (439 aa).

Helical transmembrane passes span 19-39 (ILFTIFILFVFRLGAHITAPG), 68-88 (YSLFAMGVSPYITASIIVQLL), 116-136 (YITLVLAMAQSIGITAGFQAM), 151-171 (LMIGVLLTTGSMVVTWMGEQI), 176-196 (FGSGVSVIIFAGIVSGIPSAI), 216-236 (WIFVIGLILSAIVIIYVTTFV), 269-289 (VIPVIFAGSITTAPATILQFL), 312-332 (WTGMLFYALLIVLFTFFYSFV), 373-393 (VGSLFLGLISIIPIAAQNVWG), and 396-416 (KIVALGGTSLLILIQVAIQAV).

Belongs to the SecY/SEC61-alpha family. In terms of assembly, component of the Sec protein translocase complex. Heterotrimer consisting of SecY, SecE and SecG subunits. The heterotrimers can form oligomers, although 1 heterotrimer is thought to be able to translocate proteins. Interacts with the ribosome. Interacts with SecDF, and other proteins may be involved. Interacts with SecA.

It is found in the cell membrane. Its function is as follows. The central subunit of the protein translocation channel SecYEG. Consists of two halves formed by TMs 1-5 and 6-10. These two domains form a lateral gate at the front which open onto the bilayer between TMs 2 and 7, and are clamped together by SecE at the back. The channel is closed by both a pore ring composed of hydrophobic SecY resides and a short helix (helix 2A) on the extracellular side of the membrane which forms a plug. The plug probably moves laterally to allow the channel to open. The ring and the pore may move independently. This is Protein translocase subunit SecY from Lactococcus lactis subsp. cremoris (Streptococcus cremoris).